Reading from the N-terminus, the 209-residue chain is Ribosomal RNA large subunit methyltransferase E (209 aa).

Positions 63, 65, 83, 99, and 124 each coordinate S-adenosyl-L-methionine. K164 functions as the Proton acceptor in the catalytic mechanism.

It belongs to the class I-like SAM-binding methyltransferase superfamily. RNA methyltransferase RlmE family.

Its subcellular location is the cytoplasm. It catalyses the reaction uridine(2552) in 23S rRNA + S-adenosyl-L-methionine = 2'-O-methyluridine(2552) in 23S rRNA + S-adenosyl-L-homocysteine + H(+). Specifically methylates the uridine in position 2552 of 23S rRNA at the 2'-O position of the ribose in the fully assembled 50S ribosomal subunit. The polypeptide is Ribosomal RNA large subunit methyltransferase E (Aliivibrio fischeri (strain MJ11) (Vibrio fischeri)).